The sequence spans 458 residues: Ribosomal protein uS12 methylthiotransferase RimO (458 aa).

The region spanning 6–116 (PKVGFVSLGC…VMEAVHAALP (111 aa)) is the MTTase N-terminal domain. [4Fe-4S] cluster-binding residues include cysteine 15, cysteine 51, cysteine 80, cysteine 147, cysteine 151, and cysteine 154. The 239-residue stretch at 133–371 (LTPRHYAYLK…AKQAQISALR (239 aa)) folds into the Radical SAM core domain. The TRAM domain maps to 373 to 441 (ESKIGSVQQC…EHDLFGDALP (69 aa)).

This sequence belongs to the methylthiotransferase family. RimO subfamily. [4Fe-4S] cluster is required as a cofactor.

It localises to the cytoplasm. It carries out the reaction L-aspartate(89)-[ribosomal protein uS12]-hydrogen + (sulfur carrier)-SH + AH2 + 2 S-adenosyl-L-methionine = 3-methylsulfanyl-L-aspartate(89)-[ribosomal protein uS12]-hydrogen + (sulfur carrier)-H + 5'-deoxyadenosine + L-methionine + A + S-adenosyl-L-homocysteine + 2 H(+). In terms of biological role, catalyzes the methylthiolation of an aspartic acid residue of ribosomal protein uS12. In Xanthomonas euvesicatoria pv. vesicatoria (strain 85-10) (Xanthomonas campestris pv. vesicatoria), this protein is Ribosomal protein uS12 methylthiotransferase RimO.